The following is a 238-amino-acid chain: MKKTVVASTLAVGLGVTGFAAGNSADASEQGVDKAQLAQQAQSNPESLNAAPVQDGAYDINFNYNNTDYSFQSDGQYWTWSYGQGSTNAPAQETAEQPQLVEQPQQTEQASTEQPAQEAAPQTEETQQPQQEATTQTTSSSNESTSNESSSSEASEGSSVNVNSHLQAIAQRESGGDLKAVNPSSGAAGKYQFLQSTWDSVAPSEYQGVSPTEAPEAVQDAAAVKLYNTAGASQWVTA.

The N-terminal stretch at 1 to 27 (MKKTVVASTLAVGLGVTGFAAGNSADA) is a signal peptide. Over residues 87–97 (TNAPAQETAEQ) the composition is skewed to polar residues. A disordered region spans residues 87 to 161 (TNAPAQETAE…SEASEGSSVN (75 aa)). Residues 102–156 (EQPQQTEQASTEQPAQEAAPQTEETQQPQQEATTQTTSSSNESTSNESSSSEASE) are compositionally biased toward low complexity.

It belongs to the transglycosylase family. SceD subfamily.

The protein resides in the secreted. Its function is as follows. Is able to cleave peptidoglycan and affects clumping and separation of bacterial cells. The polypeptide is Probable transglycosylase SceD 1 (sceD1) (Staphylococcus saprophyticus subsp. saprophyticus (strain ATCC 15305 / DSM 20229 / NCIMB 8711 / NCTC 7292 / S-41)).